The chain runs to 417 residues: Serine hydroxymethyltransferase (417 aa).

Residues leucine 121 and 125–127 (GHL) contribute to the (6S)-5,6,7,8-tetrahydrofolate site. Lysine 230 is modified (N6-(pyridoxal phosphate)lysine). Glutamate 245 provides a ligand contact to (6S)-5,6,7,8-tetrahydrofolate.

It belongs to the SHMT family. Homodimer. Pyridoxal 5'-phosphate serves as cofactor.

The protein resides in the cytoplasm. It catalyses the reaction (6R)-5,10-methylene-5,6,7,8-tetrahydrofolate + glycine + H2O = (6S)-5,6,7,8-tetrahydrofolate + L-serine. The protein operates within one-carbon metabolism; tetrahydrofolate interconversion. It participates in amino-acid biosynthesis; glycine biosynthesis; glycine from L-serine: step 1/1. In terms of biological role, catalyzes the reversible interconversion of serine and glycine with tetrahydrofolate (THF) serving as the one-carbon carrier. This reaction serves as the major source of one-carbon groups required for the biosynthesis of purines, thymidylate, methionine, and other important biomolecules. Also exhibits THF-independent aldolase activity toward beta-hydroxyamino acids, producing glycine and aldehydes, via a retro-aldol mechanism. The chain is Serine hydroxymethyltransferase from Desulfitobacterium hafniense (strain DSM 10664 / DCB-2).